Consider the following 298-residue polypeptide: GTP cyclohydrolase FolE2 (298 aa).

Belongs to the GTP cyclohydrolase IV family.

It catalyses the reaction GTP + H2O = 7,8-dihydroneopterin 3'-triphosphate + formate + H(+). It participates in cofactor biosynthesis; 7,8-dihydroneopterin triphosphate biosynthesis; 7,8-dihydroneopterin triphosphate from GTP: step 1/1. Functionally, converts GTP to 7,8-dihydroneopterin triphosphate. This chain is GTP cyclohydrolase FolE2, found in Pseudomonas fluorescens (strain Pf0-1).